We begin with the raw amino-acid sequence, 464 residues long: Glutamate decarboxylase (464 aa).

Residue Lys-274 is modified to N6-(pyridoxal phosphate)lysine.

The protein belongs to the group II decarboxylase family. The cofactor is pyridoxal 5'-phosphate.

The enzyme catalyses L-glutamate + H(+) = 4-aminobutanoate + CO2. Catalyzes the pyridoxal-dependent decarboxylation of glutamate to produce 4-aminobutanoate. Has weak activity with aspartate, but cannot complement an E.coli panD deletion mutant. The polypeptide is Glutamate decarboxylase (Aliivibrio fischeri (strain ATCC 700601 / ES114) (Vibrio fischeri)).